The primary structure comprises 40 residues: Large ribosomal subunit protein bL36 (40 aa).

This sequence belongs to the bacterial ribosomal protein bL36 family.

The polypeptide is Large ribosomal subunit protein bL36 (Corynebacterium glutamicum (strain R)).